The chain runs to 484 residues: Sperm motility kinase 1 (484 aa).

A Protein kinase domain is found at 8 to 256 (YEMLETIGQG…VAEVMVHPWI (249 aa)). ATP-binding positions include 14 to 22 (IGQGGCAKV) and lysine 37. Aspartate 127 acts as the Proton acceptor in catalysis. Residues 274 to 314 (KPDPAIVKPMGHIGFQAQDIEDSLRQRKFNETMASYCLLKK) enclose the UBA domain. The span at 423-434 (IDESTEGHTSAS) shows a compositional bias: polar residues. The interval 423–447 (IDESTEGHTSASAEDKPVHSRGWPR) is disordered.

Belongs to the protein kinase superfamily. Tyr protein kinase family. Smok subfamily. Testis-specific. Expressed in the testis from 22 days postpartum (22 dpp).

The catalysed reaction is L-seryl-[protein] + ATP = O-phospho-L-seryl-[protein] + ADP + H(+). The enzyme catalyses L-threonyl-[protein] + ATP = O-phospho-L-threonyl-[protein] + ADP + H(+). Its function is as follows. May play a role in sperm motility, especially in the regulation of flagellar function. In Mus musculus (Mouse), this protein is Sperm motility kinase 1 (Smok1).